A 487-amino-acid chain; its full sequence is MGSGIMTETLTDSWLVGLLCLVLGFLLLQLYKLVWGASSRAYKLPPGSTGWPLIGETISFFRGINSTAQPRQFIQEREQRYGEIFRSNLFGRSRIVVSVDPEFNKHVLQHEGRQFQANYPKPLRNLIGKYGLLSVHGDLQRKLHGAAVNLLRFERLSVDFMEDIQNLLHITLAKWEAKRDIHLQEECHQLVLNLMAKQLLDLSPSKDTEEICEAFGHFSEALLAVPIKIPGTKYARGFKAREFLIKKIYESIEDRRQHPEAVHNDLLTKLLKEDSFSEEIIADFILFLLFAGHETSSRSMSFAIKFLTDCPRALEELKAEHDALLKRKGNLKNQKLNWDDYQSLKFTQCVIHETLRVGNFGPGVFRETKEDIKTKGGFVIPRGWTVYVFLTGTHLDEKYHSSALKFDPWRWQPHLQDQELLKNPSFMPFGGGARLCPGMHLAKMELALFLHNFVTKFRWEALQDDKISYFPFPRLIKGLPIRLRLRE.

Residues 14–34 (WLVGLLCLVLGFLLLQLYKLV) traverse the membrane as a helical segment. A heme-binding site is contributed by cysteine 436.

This sequence belongs to the cytochrome P450 family. Requires heme as cofactor.

The protein localises to the membrane. This chain is Cytochrome P450 720B2 (CYP720B2), found in Pinus taeda (Loblolly pine).